The following is a 340-amino-acid chain: Solute-binding protein Dde_0634 (340 aa).

Residues 1-29 form the signal peptide; the sequence is MKSTFAALLIMVGCLVSGALLTGSEAAAA. Residues Tyr99, Arg172, 210–213, and Tyr235 contribute to the (indol-3-yl)acetate site; that span reads TSLD.

Belongs to the bacterial solute-binding protein 7 family. The complex is comprised of an extracytoplasmic solute-binding protein and a heteromeric permease formed by two transmembrane proteins.

It is found in the periplasm. Functionally, solute-binding protein that binds indole-3-pyruvate and indole-3-acetate (in vitro). Can also bind D-tryptophan (in vitro), but that is probably not a physiological ligand. Probably part of a tripartite ATP-independent periplasmic (TRAP) transport system that mediates solute transport into the cytoplasm. This chain is Solute-binding protein Dde_0634, found in Oleidesulfovibrio alaskensis (strain ATCC BAA-1058 / DSM 17464 / G20) (Desulfovibrio alaskensis).